The following is an 86-amino-acid chain: RNA-binding protein Hfq (86 aa).

The region spanning 9–68 is the Sm domain; that stretch reads DPYLNTLRKEKVGVSIYLVNGIKLQGTIESFDQFVILLKNTVSQMVYKHAISTVVPVRPI.

This sequence belongs to the Hfq family. As to quaternary structure, homohexamer.

Functionally, RNA chaperone that binds small regulatory RNA (sRNAs) and mRNAs to facilitate mRNA translational regulation in response to envelope stress, environmental stress and changes in metabolite concentrations. Also binds with high specificity to tRNAs. The sequence is that of RNA-binding protein Hfq from Pseudomonas fluorescens (strain ATCC BAA-477 / NRRL B-23932 / Pf-5).